The chain runs to 597 residues: MALKLLTSLPMYNFSRVPVSSKDPILLVTSRTRNGYLARPVQCMVANKVSTSPDILRRSANYQPSIWNHDYIESLRIEYVGETCTRQINVLKEQVRMMLHKVVNPLEQLELIEILQRLGLSYHFEEEIKRILDGVYNNDHGGDTWKAENLYATALKFRLLRQHGYSVSQEVFNSFKDERGSFKACLCEDTKGMLSLYEASFFLIEGENILEEARDFSTKHLEEYVKQNKEKNLATLVNHSLEFPLHWRMPRLEARWFINIYRHNQDVNPILLEFAELDFNIVQAAHQADLKQVSTWWKSTGLVENLSFARDRPVENFFWTVGLIFQPQFGYCRRMFTKVFALITTIDDVYDVYGTLDELELFTDVVERWDINAMDQLPDYMKICFLTLHNSVNEMALDTMKEQRFHIIKYLKKAWVDLCRYYLVEAKWYSNKYRPSLQEYIENAWISIGAPTILVHAYFFVTNPITKEALDCLEEYPNIIRWSSIIARLADDLGTSTDELKRGDVPKAIQCYMNETGASEEGAREYIKYLISATWKKMNKDRAASSPFSHIFIEIALNLARMAQCLYQHGDGHGLGNRETKDRILSLLIQPIPLNKD.

The transit peptide at 1–56 (MALKLLTSLPMYNFSRVPVSSKDPILLVTSRTRNGYLARPVQCMVANKVSTSPDIL) directs the protein to the chloroplast. Positions 310, 347, 351, 488, and 491 each coordinate (2E)-geranyl diphosphate. Positions 347 and 351 each coordinate Mg(2+). The DDXXD motif motif lies at 347–351 (DDVYD). Mg(2+) contacts are provided by Asp-491, Thr-495, and Glu-499.

This sequence belongs to the terpene synthase family. Tpsb subfamily. It depends on Mg(2+) as a cofactor. The cofactor is Mn(2+).

It localises to the plastid. The protein resides in the chloroplast. It catalyses the reaction (2E)-geranyl diphosphate = beta-myrcene + diphosphate. Its function is as follows. Involved in monoterpene (C10) biosynthesis. The major product is myrcene followed by minor amounts (1.2%) of the cyclic monoterpene limonene. The protein is Myrcene synthase, chloroplastic of Quercus ilex (Holly oak).